The primary structure comprises 354 residues: Acyl-CoA-binding domain-containing protein 2 (354 aa).

A helical; Signal-anchor transmembrane segment spans residues valine 11–phenylalanine 31. The disordered stretch occupies residues alanine 75–tryptophan 96. Positions alanine 86–tryptophan 96 are enriched in acidic residues. The ACB domain occupies leucine 104 to aspartate 194. An acyl-CoA-binding positions include tyrosine 136–lysine 140, lysine 162, and tyrosine 181. ANK repeat units lie at residues glutamate 265–alanine 294 and glutamate 298–alanine 327.

Belongs to the ACBP family. In terms of assembly, interacts (via ankyrin repeats) with HIPP26 and the ethylene-responsive element-binding proteins RAP2-3/EBP and RAP2-12. Interacts with CSE. In terms of tissue distribution, mostly expressed in roots and flowers, and, to a lower extent, in stems, pods and leaves (at protein level).

The protein resides in the cell membrane. It is found in the endoplasmic reticulum membrane. The protein localises to the peroxisome membrane. Its function is as follows. Binds medium- and long-chain acyl-CoA esters with very high affinity. Can interact in vitro with palmitoyl-CoA, but not with oleoyl-CoA. Binds to lead ions (Pb). May function as an intracellular carrier of acyl-CoA esters. Required for proper phospholipid and, to a lower extent, galactolipid composition. This chain is Acyl-CoA-binding domain-containing protein 2 (ACBP2), found in Arabidopsis thaliana (Mouse-ear cress).